We begin with the raw amino-acid sequence, 220 residues long: Probable septum site-determining protein MinC (220 aa).

This sequence belongs to the MinC family. Interacts with MinD and FtsZ.

Its function is as follows. Cell division inhibitor that blocks the formation of polar Z ring septums. Rapidly oscillates between the poles of the cell to destabilize FtsZ filaments that have formed before they mature into polar Z rings. Prevents FtsZ polymerization. The sequence is that of Probable septum site-determining protein MinC from Vibrio vulnificus (strain CMCP6).